The chain runs to 121 residues: MSTKLPIVISNGTAFKKVPVQLLLNSGSEAQHGLPRNADSQPARPRTGITRTCGQCGEIKTSLQWREGPNGAACLCNACGLFFRKLILRFGRAAAKRYMEQIKGTGTKRRIPKELTGTVRF.

The segment at 29–48 is disordered; that stretch reads EAQHGLPRNADSQPARPRTG. The GATA-type zinc finger occupies 53 to 79; sequence CGQCGEIKTSLQWREGPNGAACLCNAC.

This Saccharomyces cerevisiae (strain ATCC 204508 / S288c) (Baker's yeast) protein is Protein GAT4 (GAT4).